Here is a 280-residue protein sequence, read N- to C-terminus: Protein YibA (280 aa).

The protein is Protein YibA (yibA) of Escherichia coli O157:H7.